Consider the following 75-residue polypeptide: UPF0270 protein PSPPH_1506 (75 aa).

It belongs to the UPF0270 family.

This chain is UPF0270 protein PSPPH_1506, found in Pseudomonas savastanoi pv. phaseolicola (strain 1448A / Race 6) (Pseudomonas syringae pv. phaseolicola (strain 1448A / Race 6)).